The primary structure comprises 4074 residues: Fibrocystin (4074 aa).

The first 22 residues, 1–22 (MIVWLISLMSIEILLLAGPALS), serve as a signal peptide directing secretion. Residues Asn54 and Asn224 are each glycosylated (N-linked (GlcNAc...) asparagine). The region spanning 258 to 310 (EILSVFPETGSLGGKTDIIITGDFFDNPALVTIAGVPCDIRHMSPRKIECTTR) is the IPT/TIG 1 domain. The region spanning 323–483 (AGNRGLLFEV…TWLNPDVVST (161 aa)) is the PA14 domain. Residues Asn355, Asn385, Asn518, Asn527, Asn640, Asn710, Asn741, Asn822, Asn829, Asn868, Asn953, Asn966, Asn976, Asn1006, Asn1059, Asn1083, Asn1115, Asn1134, Asn1233, Asn1240, Asn1274, Asn1284, Asn1308, Asn1319, Asn1342, Asn1373, Asn1445, Asn1456, Asn1471, Asn1490, Asn1528, Asn1560, Asn1578, Asn1598, Asn1627, Asn1694, Asn1760, Asn1775, Asn1789, Asn1875, Asn1915, Asn1941, Asn1955, Asn2030, Asn2111, and Asn2140 are each glycosylated (N-linked (GlcNAc...) asparagine). In terms of domain architecture, IPT/TIG 2 spans 944–1000 (SLLIYIFGINFSGDPQALEIMVNKTNCKVIFSNQTNVICQTDLLPVGMHRLFMVVRP). 3 consecutive IPT/TIG domains span residues 1018-1101 (PRLD…AFTY), 1107-1186 (PVIT…RSPG), and 1199-1274 (SIEP…WAGN). The 80-residue stretch at 1385-1464 (PWIMAISPTH…LNVTVIVNGL (80 aa)) folds into the IPT/TIG 6 domain. Positions 1573 to 1641 (HYFPKNFSIH…LVIEVDGLSY (69 aa)) constitute an IPT/TIG 7 domain. The 122-residue stretch at 1928–2049 (HSWFPERVPQ…PEVTFTHLQA (122 aa)) folds into the G8 1 domain. PbH1 repeat units lie at residues 2245-2267 (TLGL…LVGT), 2288-2322 (EQGN…YILN), 2351-2373 (APLL…FIYP), 2383-2404 (RGPT…RISR), and 2405-2427 (SSNL…DILE). Residue Asn2390 is glycosylated (N-linked (GlcNAc...) asparagine). Residues Asn2431, Asn2467, Asn2531, Asn2549, Asn2579, Asn2591, Asn2749, Asn2764, Asn2972, and Asn3004 are each glycosylated (N-linked (GlcNAc...) asparagine). Residues 2460-2483 (RWELIISNTTFVNFDLTDCVSIRT) form a PbH1 6 repeat. Positions 2743–2869 (EGWGGHNHTI…PKKSWTRLAA (127 aa)) constitute a G8 2 domain. Residues 3029-3051 (SHGIILNDNIVFGTVGHGIDLEG) form a PbH1 7 repeat. The N-linked (GlcNAc...) asparagine glycan is linked to Asn3053. Residues 3082–3104 (AKDINLYGNVVAGSERIGFHIQG) form a PbH1 8 repeat. N-linked (GlcNAc...) asparagine glycosylation is found at Asn3136, Asn3165, Asn3221, Asn3484, Asn3702, Asn3721, and Asn3833. The PbH1 9 repeat unit spans residues 3158 to 3183 (ENSVEIENITLVDNSIGLLATVYVSS). A helical membrane pass occupies residues 3854–3874 (IILAVSLCSVASWLALCCLVC). The interval 3871–3888 (CLVCCWFRKSKSRKIKSE) is ciliary targeting sequence (CST). Disordered stretches follow at residues 3896-3919 (NDQK…KEDT), 3943-3965 (NGVS…REED), and 4031-4074 (LQGQ…QEQL). 2 stretches are compositionally biased toward basic and acidic residues: residues 3910 to 3919 (RSQETKKEDT) and 3954 to 3965 (AVREEGSSREED). The nuclear localization signal (NLS) stretch occupies residues 3947–3976 (RRKVSRRAVREEGSSREEDVVPAPRIISIT).

As to quaternary structure, interacts with CAMLG. Interacts with PKD2. Interacts (via CST) with ARF4; this interaction allows an efficient PKHD1 trafficking to the cilium. Interacts (via CST) with RAB8A; this interaction controls trafficking through the endomembrane systeme and to the cilium. Interacts (via CST) with TULP3; this interaction allows PKHD1 trafficking to the cilium. Post-translationally, palmitoylated. Palmitoylation facilitates the trafficking to the cilia and membrane targeting. In terms of processing, N-glycosylated. Several proteolytic cleavages occur within the extracellular domain, whereas at least one cleavage occurs within the cytoplasmic domain. Cleaved by a probable proprotein convertase which produces an extracellular domain (polyductin extracellular domain, (PECD)) and a C-terminal fragment (polyductin transmembrane fragment (PTM)) which are tethered together by disulfide bonds. This extracellular domain (PECD) is then shed from the primary cilium by activation of a member of the ADAM metalloproteinase disintegrins family, resulting in concomitant release of an intra-cellular C-terminal fragment (ICD) via a gamma-secretase-dependent process. The proteolytic cleavage of the C-terminal intracellular fragment (ICD) is controlled by cytosolic calcium concentration and activation of PKC.

The protein resides in the cell membrane. It is found in the cytoplasm. Its subcellular location is the apical cell membrane. The protein localises to the cytoskeleton. It localises to the cilium basal body. The protein resides in the cell projection. It is found in the cilium. Its subcellular location is the spindle. The protein localises to the chromosome. It localises to the centromere. The protein resides in the nucleus. It is found in the secreted. Its subcellular location is the extracellular exosome. The protein localises to the endoplasmic reticulum. It localises to the golgi apparatus. Promotes ciliogenesis in renal epithelial cells and therefore participates in the tubules formation and/ or ensures the maintenance of the architecture of the lumen of the kidney. Has an impact on cellular symmetry by ensuring correct bipolar cell division through the regulation of centrosome duplication and mitotic spindle assembly and by maintaining oriented cell division (OCD) during tubular elongation through planar cell polarity (PCP) pathway. During epithelial cell morphogenesis, it also regulates cell-cell and cell-matrix adhesion and participates in cell motility. Promotes cell-cell contact through the positive regulation of PTK2 kinase activity leading to either positive regulation of epithelial cell proliferation through the HRAS/RAF1 pathways, or negative regulation of apoptosis through the PDK1/AKT1 pathway. May act in collecting-duct and biliary differentiation. May participate in the regulation of the cholangiocytes proliferation and the CCN2 production in an CXCL8-dependent manner. This Canis lupus familiaris (Dog) protein is Fibrocystin.